The following is a 416-amino-acid chain: Chorismate synthase (416 aa).

NADP(+) contacts are provided by R40 and R46. Residues R135–S137, Q256–A257, G300, K315–T319, and R341 contribute to the FMN site.

This sequence belongs to the chorismate synthase family. In terms of assembly, homotetramer. FMNH2 serves as cofactor.

The catalysed reaction is 5-O-(1-carboxyvinyl)-3-phosphoshikimate = chorismate + phosphate. Its pathway is metabolic intermediate biosynthesis; chorismate biosynthesis; chorismate from D-erythrose 4-phosphate and phosphoenolpyruvate: step 7/7. In terms of biological role, catalyzes the anti-1,4-elimination of the C-3 phosphate and the C-6 proR hydrogen from 5-enolpyruvylshikimate-3-phosphate (EPSP) to yield chorismate, which is the branch point compound that serves as the starting substrate for the three terminal pathways of aromatic amino acid biosynthesis. This reaction introduces a second double bond into the aromatic ring system. This Kocuria rhizophila (strain ATCC 9341 / DSM 348 / NBRC 103217 / DC2201) protein is Chorismate synthase.